The sequence spans 430 residues: ATP-dependent RNA helicase RhlB (430 aa).

The short motif at 9–37 (QKFSDFALHPQVIEALETKGFHNCTPIQA) is the Q motif element. Residues 40-219 (LPFTLSGRDV…FENMNNAEYV (180 aa)) form the Helicase ATP-binding domain. 53-60 (AQTGTGKT) contacts ATP. Residues 165 to 168 (DEAD) carry the DEAD box motif. The region spanning 245–390 (RLLQTLIEEE…VSRYNSDALM (146 aa)) is the Helicase C-terminal domain. A disordered region spans residues 388 to 430 (ALMTDLPPPKRLTRNRSGNGPRRGGNNNRRSSASRSPNRKRSG). Residues 402–423 (NRSGNGPRRGGNNNRRSSASRS) are compositionally biased toward low complexity.

Belongs to the DEAD box helicase family. RhlB subfamily. Component of the RNA degradosome, which is a multiprotein complex involved in RNA processing and mRNA degradation.

The protein localises to the cytoplasm. It catalyses the reaction ATP + H2O = ADP + phosphate + H(+). In terms of biological role, DEAD-box RNA helicase involved in RNA degradation. Has RNA-dependent ATPase activity and unwinds double-stranded RNA. The chain is ATP-dependent RNA helicase RhlB from Erwinia tasmaniensis (strain DSM 17950 / CFBP 7177 / CIP 109463 / NCPPB 4357 / Et1/99).